The primary structure comprises 384 residues: Ribosomal RNA large subunit methyltransferase G (384 aa).

Belongs to the methyltransferase superfamily. RlmG family.

The protein localises to the cytoplasm. It catalyses the reaction guanosine(1835) in 23S rRNA + S-adenosyl-L-methionine = N(2)-methylguanosine(1835) in 23S rRNA + S-adenosyl-L-homocysteine + H(+). Specifically methylates the guanine in position 1835 (m2G1835) of 23S rRNA. This Streptomyces griseus subsp. griseus (strain JCM 4626 / CBS 651.72 / NBRC 13350 / KCC S-0626 / ISP 5235) protein is Ribosomal RNA large subunit methyltransferase G.